A 493-amino-acid polypeptide reads, in one-letter code: Cobyric acid synthase (493 aa).

The GATase cobBQ-type domain occupies 252–443; the sequence is DLQITVVRLP…LHGLFDNGPW (192 aa). The active-site Nucleophile is Cys-333. His-435 is a catalytic residue.

The protein belongs to the CobB/CobQ family. CobQ subfamily.

It participates in cofactor biosynthesis; adenosylcobalamin biosynthesis. Functionally, catalyzes amidations at positions B, D, E, and G on adenosylcobyrinic A,C-diamide. NH(2) groups are provided by glutamine, and one molecule of ATP is hydrogenolyzed for each amidation. The protein is Cobyric acid synthase of Nostoc sp. (strain PCC 7120 / SAG 25.82 / UTEX 2576).